The primary structure comprises 131 residues: Histone H2A type 1-A (131 aa).

The disordered stretch occupies residues 1–23; that stretch reads MSGRGKQGGKARAKSKSRSSRAG. N-acetylserine is present on Ser-2. Ser-2 bears the Phosphoserine; by RPS6KA5 mark. At Arg-4 the chain carries Citrulline; alternate. Residue Arg-4 is modified to Symmetric dimethylarginine; by PRMT5; alternate. Position 6 is an N6-(2-hydroxyisobutyryl)lysine (Lys-6). A compositionally biased stretch (basic residues) spans 7-19; that stretch reads QGGKARAKSKSRS. The residue at position 10 (Lys-10) is an N6-(2-hydroxyisobutyryl)lysine; alternate. An N6-(beta-hydroxybutyryl)lysine; alternate modification is found at Lys-10. Lys-10 is subject to N6-lactoyllysine; alternate. An N6-succinyllysine; alternate modification is found at Lys-10. N6-(beta-hydroxybutyryl)lysine is present on Lys-14. Glycyl lysine isopeptide (Lys-Gly) (interchain with G-Cter in ubiquitin) cross-links involve residues Lys-14 and Lys-16. Lys-37 is subject to N6-(2-hydroxyisobutyryl)lysine; alternate. Residue Lys-37 is modified to N6-(beta-hydroxybutyryl)lysine; alternate. Residue Lys-37 is modified to N6-crotonyllysine; alternate. Lys-75 and Lys-76 each carry N6-(2-hydroxyisobutyryl)lysine. Lys-96 is subject to N6-(2-hydroxyisobutyryl)lysine; alternate. Lys-96 carries the post-translational modification N6-(beta-hydroxybutyryl)lysine; alternate. N6-succinyllysine; alternate is present on Lys-96. The residue at position 96 (Lys-96) is an N6-glutaryllysine; alternate. Gln-105 is modified (N5-methylglutamine). N6-(2-hydroxyisobutyryl)lysine; alternate is present on Lys-119. Lys-119 carries the post-translational modification N6-(beta-hydroxybutyryl)lysine; alternate. Lys-119 and Lys-120 each carry N6-crotonyllysine; alternate. 2 positions are modified to N6-glutaryllysine; alternate: Lys-119 and Lys-120. Lys-120 is covalently cross-linked (Glycyl lysine isopeptide (Lys-Gly) (interchain with G-Cter in ubiquitin); alternate). Residue Thr-121 is modified to Phosphothreonine; by DCAF1. Lys-127 carries the N6-crotonyllysine modification.

The protein belongs to the histone H2A family. In terms of assembly, the nucleosome is a histone octamer containing two molecules each of H2A, H2B, H3 and H4 assembled in one H3-H4 heterotetramer and two H2A-H2B heterodimers. The octamer wraps approximately 147 bp of DNA. Deiminated on Arg-4 in granulocytes upon calcium entry. Post-translationally, monoubiquitination of Lys-120 (H2AK119Ub) by RING1, TRIM37 and RNF2/RING2 complex gives a specific tag for epigenetic transcriptional repression and participates in X chromosome inactivation of female mammals. It is involved in the initiation of both imprinted and random X inactivation. Ubiquitinated H2A is enriched in inactive X chromosome chromatin. Ubiquitination of H2A functions downstream of methylation of 'Lys-27' of histone H3 (H3K27me). H2AK119Ub by RNF2/RING2 can also be induced by ultraviolet and may be involved in DNA repair. Monoubiquitination of Lys-120 (H2AK119Ub) by TRIM37 may promote transformation of cells in a number of breast cancers. Following DNA double-strand breaks (DSBs), it is ubiquitinated through 'Lys-63' linkage of ubiquitin moieties by the E2 ligase UBE2N and the E3 ligases RNF8 and RNF168, leading to the recruitment of repair proteins to sites of DNA damage. Ubiquitination at Lys-14 and Lys-16 (H2AK13Ub and H2AK15Ub, respectively) in response to DNA damage is initiated by RNF168 that mediates monoubiquitination at these 2 sites, and 'Lys-63'-linked ubiquitin are then conjugated to monoubiquitin; RNF8 is able to extend 'Lys-63'-linked ubiquitin chains in vitro. Deubiquitinated by USP51 at Lys-14 and Lys-16 (H2AK13Ub and H2AK15Ub, respectively) after damaged DNA is repaired. H2AK119Ub and ionizing radiation-induced 'Lys-63'-linked ubiquitination (H2AK13Ub and H2AK15Ub) are distinct events. In terms of processing, phosphorylation on Ser-2 (H2AS1ph) is enhanced during mitosis. Phosphorylation on Ser-2 by RPS6KA5/MSK1 directly represses transcription. Acetylation of H3 inhibits Ser-2 phosphorylation by RPS6KA5/MSK1. Phosphorylation at Thr-121 (H2AT120ph) by DCAF1 is present in the regulatory region of many tumor suppresor genes and down-regulates their transcription. Glutamine methylation at Gln-105 (H2AQ104me) by FBL is specifically dedicated to polymerase I. It is present at 35S ribosomal DNA locus and impairs binding of the FACT complex. Post-translationally, symmetric dimethylation on Arg-4 by the PRDM1/PRMT5 complex may play a crucial role in the germ-cell lineage. In terms of processing, crotonylation (Kcr) is specifically present in male germ cells and marks testis-specific genes in post-meiotic cells, including X-linked genes that escape sex chromosome inactivation in haploid cells. Crotonylation marks active promoters and enhancers and confers resistance to transcriptional repressors. It is also associated with post-meiotically activated genes on autosomes. Lactylated in macrophages by EP300/P300 by using lactoyl-CoA directly derived from endogenous or exogenous lactate, leading to stimulates gene transcription.

It localises to the nucleus. Its subcellular location is the chromosome. Functionally, core component of nucleosome. Nucleosomes wrap and compact DNA into chromatin, limiting DNA accessibility to the cellular machineries which require DNA as a template. Histones thereby play a central role in transcription regulation, DNA repair, DNA replication and chromosomal stability. DNA accessibility is regulated via a complex set of post-translational modifications of histones, also called histone code, and nucleosome remodeling. The sequence is that of Histone H2A type 1-A from Homo sapiens (Human).